Consider the following 513-residue polypeptide: ATP synthase subunit alpha 1 (513 aa).

169–176 provides a ligand contact to ATP; that stretch reads GDRQTGKT.

This sequence belongs to the ATPase alpha/beta chains family. F-type ATPases have 2 components, CF(1) - the catalytic core - and CF(0) - the membrane proton channel. CF(1) has five subunits: alpha(3), beta(3), gamma(1), delta(1), epsilon(1). CF(0) has three main subunits: a(1), b(2) and c(9-12). The alpha and beta chains form an alternating ring which encloses part of the gamma chain. CF(1) is attached to CF(0) by a central stalk formed by the gamma and epsilon chains, while a peripheral stalk is formed by the delta and b chains.

It is found in the cell inner membrane. It carries out the reaction ATP + H2O + 4 H(+)(in) = ADP + phosphate + 5 H(+)(out). Produces ATP from ADP in the presence of a proton gradient across the membrane. The alpha chain is a regulatory subunit. In Vibrio campbellii (strain ATCC BAA-1116), this protein is ATP synthase subunit alpha 1.